Reading from the N-terminus, the 576-residue chain is Ferroportin (576 aa).

Topologically, residues 1-23 (MPKAGEQARQGGCCGSLANYLTS) are cytoplasmic. The helical transmembrane segment at 24-53 (AKFLLYLGHSLSTWGDRMWHFAVSVFLVEL) threads the bilayer. D39 and H43 together coordinate Fe cation. Residues 54 to 57 (YGNS) lie on the Extracellular side of the membrane. A helical transmembrane segment spans residues 58 to 84 (LLLTAVYGLVVAGSVLVLGAIIGDWVD). The Cytoplasmic segment spans residues 85-87 (KNA). A helical transmembrane segment spans residues 88–118 (RLKVAQTSLVVQNVSVILCGIILMMVFLHKN). At 119 to 126 (ELLTMYHG) the chain is on the extracellular side. Residues 127–162 (WVLTFCYILIITIADVANLASTATAITIQRDWIVVV) form a helical membrane-spanning segment. Topologically, residues 163–164 (AG) are cytoplasmic. Residues 165–195 (GDRSKLADMNATIRRIDQLTNILAPMAVGQI) traverse the membrane as a helical segment. At 196 to 202 (MTFGSAV) the chain is on the extracellular side. The helical transmembrane segment at 203 to 229 (IGCGFISGWNLVSMCVEYFLLWKVYQK) threads the bilayer. The Cytoplasmic segment spans residues 230 to 306 (TPALAVKAAL…DGWVSYYNQS (77 aa)). A helical transmembrane segment spans residues 307 to 333 (VFLAGMGLAFLYMTVLGFDCITTGYAY). C326 provides a ligand contact to Fe cation. Residues 334 to 338 (TQGLS) lie on the Extracellular side of the membrane. A helical transmembrane segment spans residues 339 to 366 (GSILSILMGASAITGIMGTVAFTWLRRK). Residues 367-368 (CG) are Cytoplasmic-facing. The chain crosses the membrane as a helical span at residues 369 to 391 (LVRTGLISGFAQLSCLILCVISV). Residues 392–458 (FMPGSPLDLS…ETTPKSVPII (67 aa)) are Extracellular-facing. An N-linked (GlcNAc...) asparagine glycan is attached at N439. A helical membrane pass occupies residues 459–488 (SVSLLFAGVIAARIGLWSFDLTVTQLLQEN). The Cytoplasmic segment spans residues 489-493 (VIESE). A helical membrane pass occupies residues 494-518 (RGIINGVQNSMNYLLDLLHFIMVIL). Residue H512 coordinates Fe cation. The Extracellular segment spans residues 519–521 (APN). A helical membrane pass occupies residues 522 to 547 (PEAFGLLVLISVSFVAMGHIMYFRFA). Residues 548–576 (QKTLGSKLFACGADDEEVTNENQANTSVV) are Cytoplasmic-facing.

It belongs to the ferroportin (FP) (TC 2.A.100) family. SLC40A subfamily. Identified in a complex with STOM. Interacts with HAMP; affinity of the peptide hormone HAMP for SLC40A1 increases by 80-fold in the presence of iron and the interaction promotes SLC40A1 ubiquitination and degradation. Part of a complex composed of SLC40A1/ferroportin, TF/transferrin and HEPH/hephaestin that transfers iron from cells to transferrin. Post-translationally, polyubiquitinated by RNF217; leading to proteasomal degradation. Under conditions of high systemic iron levels, both the hormone peptide hepcidin/HAMP and holo(iron bound)-transferrin/TF induce the ubiquitination, internalization and proteasomal degradation of SLC40A1 to control iron release from cells.

Its subcellular location is the cell membrane. It localises to the basolateral cell membrane. It catalyses the reaction Fe(2+)(in) = Fe(2+)(out). During elevated serum iron levels, liver-derived hepcidin/HAMP negatively regulates cell surface ferroportin/SLC40A1 by inducing its ubiquitination, internalization, and degradation. Indeed, hepcidin/HAMP affinity towards ferroportin/SLC40A1 increases by 80-fold in the presence of iron. In terms of biological role, transports Fe(2+) from the inside of a cell to the outside of the cell, playing a key role for maintaining systemic iron homeostasis. Transports iron from intestinal, splenic, hepatic cells, macrophages and erythrocytes into the blood to provide iron to other tissues. Controls therefore dietary iron uptake, iron recycling by macrophages and erythrocytes, and release of iron stores in hepatocytes. When iron is in excess in serum, circulating HAMP/hepcidin levels increase resulting in a degradation of SLC40A1, thus limiting the iron efflux to plasma. This chain is Ferroportin, found in Canis lupus familiaris (Dog).